The primary structure comprises 719 residues: DNA polymerase epsilon subunit B (719 aa).

The segment at 107-147 (SIPPKTKTYNNGGGKTTTIDRFLTKRPSPSDNDEGPLDQSI) is disordered.

It belongs to the DNA polymerase epsilon subunit B family. In terms of assembly, heterotetramer. Consists of four subunits: POL2, DPB2, DPB3 and DPB4.

The protein localises to the nucleus. In terms of biological role, as accessory component of the DNA polymerase epsilon (DNA polymerase II) participates in chromosomal DNA replication. This is DNA polymerase epsilon subunit B (DPB2) from Candida glabrata (strain ATCC 2001 / BCRC 20586 / JCM 3761 / NBRC 0622 / NRRL Y-65 / CBS 138) (Yeast).